An 80-amino-acid chain; its full sequence is Conotoxin ArMKLT2-0321 (80 aa).

Positions M1 to T21 are cleaved as a signal peptide. A propeptide spanning residues A22–R48 is cleaved from the precursor. 3 disulfide bridges follow: C50–C63, C57–C68, and C62–C77.

This sequence belongs to the conotoxin O1 superfamily. As to expression, expressed by the venom duct.

The protein resides in the secreted. The polypeptide is Conotoxin ArMKLT2-0321 (Conus arenatus (Sand-dusted cone)).